A 125-amino-acid chain; its full sequence is Crustacean hyperglycemic hormones 5 (125 aa).

Positions 1–34 (MKPGNTSFNMVSFRMVWTAMMATLLVAGASSAGT) are cleaved as a signal peptide. 3 disulfide bridges follow: Cys-58–Cys-94, Cys-74–Cys-90, and Cys-77–Cys-103. Val-123 carries the valine amide modification.

The protein belongs to the arthropod CHH/MIH/GIH/VIH hormone family. Produced by the medulla terminalis X-organ in the eyestalks and transported to the sinus gland where they are stored and released.

The protein resides in the secreted. Hormone found in the sinus gland of isopods and decapods which controls the blood sugar level. Has a secretagogue action over the amylase released from the midgut gland. May act as a stress hormone and may be involved in the control of molting and reproduction. In Penaeus japonicus (Kuruma prawn), this protein is Crustacean hyperglycemic hormones 5.